The sequence spans 332 residues: Small ribosomal subunit protein uS2 (332 aa).

Belongs to the universal ribosomal protein uS2 family.

The chain is Small ribosomal subunit protein uS2 from Afipia carboxidovorans (strain ATCC 49405 / DSM 1227 / KCTC 32145 / OM5) (Oligotropha carboxidovorans).